Consider the following 343-residue polypeptide: Heat-inducible transcription repressor HrcA (343 aa).

The protein belongs to the HrcA family.

In terms of biological role, negative regulator of class I heat shock genes (grpE-dnaK-dnaJ and groELS operons). Prevents heat-shock induction of these operons. The protein is Heat-inducible transcription repressor HrcA of Mycobacterium avium (strain 104).